Consider the following 380-residue polypeptide: Cytochrome b (380 aa).

4 helical membrane-spanning segments follow: residues 34-54, 78-99, 114-134, and 179-199; these read FGSL…LLAM, WLIR…YFHI, WNTG…GYVL, and FFAL…IHLT. The heme b site is built by His-84 and His-98. Heme b is bound by residues His-183 and His-197. His-202 serves as a coordination point for a ubiquinone. Transmembrane regions (helical) follow at residues 227–247, 289–309, 321–341, and 348–368; these read TKDI…ALFS, LGGV…PLLH, LSQL…WIGS, and FIII…ILFP.

This sequence belongs to the cytochrome b family. The cytochrome bc1 complex contains 11 subunits: 3 respiratory subunits (MT-CYB, CYC1 and UQCRFS1), 2 core proteins (UQCRC1 and UQCRC2) and 6 low-molecular weight proteins (UQCRH/QCR6, UQCRB/QCR7, UQCRQ/QCR8, UQCR10/QCR9, UQCR11/QCR10 and a cleavage product of UQCRFS1). This cytochrome bc1 complex then forms a dimer. Heme b is required as a cofactor.

The protein resides in the mitochondrion inner membrane. Component of the ubiquinol-cytochrome c reductase complex (complex III or cytochrome b-c1 complex) that is part of the mitochondrial respiratory chain. The b-c1 complex mediates electron transfer from ubiquinol to cytochrome c. Contributes to the generation of a proton gradient across the mitochondrial membrane that is then used for ATP synthesis. The chain is Cytochrome b (MT-CYB) from Pygoscelis papua (Gentoo penguin).